The primary structure comprises 458 residues: Ammonium transporter Rh type B (458 aa).

The Cytoplasmic portion of the chain corresponds to 1–13 (MAGSPSRAAGRRL). Residues 14-34 (QLPLLCLFLQGATAVLFAVFV) traverse the membrane as a helical segment. Residues 35-61 (RYNHKTDAALWHRSNHSNADNEFYFRY) are Extracellular-facing. An N-linked (GlcNAc...) asparagine glycan is attached at asparagine 49. Residues 62-82 (PSFQDVHAMVFVGFGFLMVFL) traverse the membrane as a helical segment. Residues 83–86 (QRYG) are Cytoplasmic-facing. A helical membrane pass occupies residues 87–107 (FSSVGFTFLLAAFALQWSTLV). The Extracellular portion of the chain corresponds to 108–124 (QGFLHSFHGGHIHVGVE). A helical transmembrane segment spans residues 125–145 (SMINADFCAGAVLISFGAVLG). Topologically, residues 146 to 149 (KTGP) are cytoplasmic. A helical transmembrane segment spans residues 150–170 (AQLLLMALLEVVLFGINEFVL). Over 171–178 (LHLLGVRD) the chain is Extracellular. The chain crosses the membrane as a helical span at residues 179 to 201 (AGGSMTIHTFGAYFGLVLSRVLY). The Cytoplasmic segment spans residues 202-219 (RPQLEKSKHRQGSVYHSD). The helical transmembrane segment at 220-240 (LFTMIGTIFLWIFWPSFNAAL) threads the bilayer. Over 241 to 251 (TALGAGQHRTA) the chain is Extracellular. Residues 252 to 272 (LNTYYSLAASTLGTFALSALV) traverse the membrane as a helical segment. At 273 to 282 (GEDGRLDMVH) the chain is on the cytoplasmic side. Residues 283–303 (IQNAALTGGVVVGTSSKMMLT) traverse the membrane as a helical segment. Position 304 (proline 304) is a topological domain, extracellular. Residues 305–325 (FGALAAGFLAGTVSTLGYKFF) traverse the membrane as a helical segment. Topologically, residues 326-346 (TPILESKFKVQDTCGVHNLHG) are cytoplasmic. A helical transmembrane segment spans residues 347–367 (MPGVLGALLGVLVAGLATHEA). Over 368-393 (YGDGLESVFPLIAEGQRSATSQAMHQ) the chain is Extracellular. Residues 394 to 414 (LFGLFVTLMFASVGGGLGGLL) traverse the membrane as a helical segment. The Cytoplasmic portion of the chain corresponds to 415–458 (LKLPFLDSPPDSQCYEDQVHWQVPGEHEDKAQRPLRVEEADTYA). An interaction with ANK3 region spans residues 416–424 (KLPFLDSPP). Positions 429 to 432 (YEDQ) match the Basolateral sorting signal motif. The interval 439–458 (GEHEDKAQRPLRVEEADTYA) is disordered.

The protein belongs to the ammonium transporter (TC 2.A.49) family. Rh subfamily. In terms of assembly, interacts (via C-terminus) with ANK2 and ANK3; required for targeting to the basolateral membrane. N-glycosylated.

It is found in the cell membrane. The protein resides in the basolateral cell membrane. It catalyses the reaction NH4(+)(in) = NH4(+)(out). The enzyme catalyses methylamine(out) = methylamine(in). The catalysed reaction is CO2(out) = CO2(in). Functionally, ammonium transporter involved in the maintenance of acid-base homeostasis. Transports ammonium and its related derivative methylammonium across the basolateral plasma membrane of epithelial cells likely contributing to renal transepithelial ammonia transport and ammonia metabolism. May transport either NH4(+) or NH3 ammonia species predominantly mediating an electrogenic NH4(+) transport. May act as a CO2 channel providing for renal acid secretion. In Gorilla gorilla gorilla (Western lowland gorilla), this protein is Ammonium transporter Rh type B (RHBG).